The primary structure comprises 189 residues: ComE operon protein 2 (189 aa).

The 128-residue stretch at 5 to 132 folds into the CMP/dCMP-type deaminase domain; sequence SWNQYFMAQS…PYAQELFEQA (128 aa). His70 serves as a coordination point for Zn(2+). Glu72 serves as the catalytic Proton donor. Residues Cys98 and Cys101 each contribute to the Zn(2+) site.

The protein belongs to the cytidine and deoxycytidylate deaminase family. Requires Zn(2+) as cofactor.

Its function is as follows. Dispensable for transformability. This is ComE operon protein 2 (comEB) from Bacillus subtilis (strain 168).